Consider the following 88-residue polypeptide: ATP synthase epsilon chain (88 aa).

This sequence belongs to the ATPase epsilon chain family. As to quaternary structure, F-type ATPases have 2 components, CF(1) - the catalytic core - and CF(0) - the membrane proton channel. CF(1) has five subunits: alpha(3), beta(3), gamma(1), delta(1), epsilon(1). CF(0) has three main subunits: a, b and c.

The protein resides in the cell inner membrane. In terms of biological role, produces ATP from ADP in the presence of a proton gradient across the membrane. The chain is ATP synthase epsilon chain (atpC) from Chlorobium limicola.